A 1435-amino-acid chain; its full sequence is Sterol 3-beta-glucosyltransferase (1435 aa).

Disordered stretches follow at residues 1–26, 75–107, 123–169, and 185–206; these read MAPD…HQVA, SDEE…KFEG, RFSS…KDTP, and PSFE…RTSP. A compositionally biased stretch (polar residues) spans 85–99; that stretch reads TRQSSESHINRSSID. Over residues 123–133 the composition is skewed to low complexity; that stretch reads RFSSRSKSKSS. Positions 134–143 are enriched in polar residues; that stretch reads NTIARGSRTP. Positions 189–206 are enriched in basic and acidic residues; the sequence is MPRKSKDPAEVDDERTSP. A GRAM 1 domain is found at 211–258; that stretch reads ERLMEIFKFETPEDVLEEYPCWLMKSVLLQGYMYITTKHICFYAYLPK. A PH domain is found at 262–360; that stretch reads EVVKSGYLSK…WVKALQKIIF (99 aa). Disordered regions lie at residues 444-477, 527-594, 610-671, and 727-759; these read LSTA…PNAP, DLNR…QASA, QHSP…QAEI, and GKKH…ATPA. Residues 527 to 537 show a composition bias toward basic and acidic residues; it reads DLNRLTTEHHR. Polar residues-rich tracts occupy residues 539-554, 628-647, and 657-671; these read NSAN…STNR, KSRS…TRTQ, and TTGS…QAEI. Residues 729-742 show a composition bias toward basic and acidic residues; it reads KHYEEPHGIPRDNE. Residues 760–826 form the GRAM 2 domain; sequence DRFRDHFALP…KDIENVDKEK (67 aa). Residues S949, R950, D952, A1252, H1254, H1267, G1271, T1272, D1291, and Q1292 each coordinate UDP-alpha-D-glucose.

It belongs to the glycosyltransferase 28 family.

Its subcellular location is the cytoplasm. It localises to the preautophagosomal structure membrane. It carries out the reaction a sterol + UDP-alpha-D-glucose = a sterol 3-beta-D-glucoside + UDP + H(+). It catalyses the reaction ergosterol + UDP-alpha-D-glucose = ergosteryl 3-beta-D-glucoside + UDP + H(+). Its function is as follows. Sterol glycosyltransferase responsible for the glycosylation of ergosterol to form ergosterol-glucoside. In Sclerotinia sclerotiorum (strain ATCC 18683 / 1980 / Ss-1) (White mold), this protein is Sterol 3-beta-glucosyltransferase.